The following is a 377-amino-acid chain: All-trans-retinol dehydrogenase [NAD(+)] ADH4 (377 aa).

Cys47 is a Zn(2+) binding site. 48 to 49 (PT) is a binding site for NAD(+). 6 residues coordinate Zn(2+): His68, Cys98, Cys101, Cys104, Cys112, and Cys179. NAD(+) contacts are provided by residues 204–209 (GLGCVG), Asp228, Lys233, 297–299 (VGA), 320–322 (TFF), and Arg372.

Belongs to the zinc-containing alcohol dehydrogenase family. Class-II subfamily. As to quaternary structure, dimer. Zn(2+) is required as a cofactor. As to expression, liver specific.

Its subcellular location is the cytoplasm. The enzyme catalyses all-trans-retinol + NAD(+) = all-trans-retinal + NADH + H(+). It catalyses the reaction 9-cis-retinol + NAD(+) = 9-cis-retinal + NADH + H(+). The catalysed reaction is 20-oxo-(5Z,8Z,11Z,14Z)-eicosatetraenoate + NAD(+) + H2O = (5Z,8Z,11Z,14Z)-eicosatetraenedioate + NADH + 2 H(+). It carries out the reaction 20-hydroxy-(5Z,8Z,11Z,14Z)-eicosatetraenoate + NAD(+) = 20-oxo-(5Z,8Z,11Z,14Z)-eicosatetraenoate + NADH + H(+). The enzyme catalyses 1,4-benzoquinone + NADH + H(+) = hydroquinone + NAD(+). With respect to regulation, oxidation of 20-HETE is inhibited by low concentrations of N-heptylformamide. Oxidation of 20-HETE is a decreased by 55-65% by either all-trans-retinol or all-trans-retinoic acid. Strongly inhibited by omega-hydroxy fatty acids. Its function is as follows. Catalyzes the NAD-dependent oxidation of either all-trans-retinol or 9-cis-retinol. Also oxidizes long chain omega-hydroxy fatty acids, such as 20-HETE, producing both the intermediate aldehyde, 20-oxoarachidonate and the end product, a dicarboxylic acid, (5Z,8Z,11Z,14Z)-eicosatetraenedioate. Also catalyzes the reduction of benzoquinones. This is All-trans-retinol dehydrogenase [NAD(+)] ADH4 from Rattus norvegicus (Rat).